The primary structure comprises 155 residues: Ribonuclease 2B (155 aa).

Residues 1–25 (MGLKLLESRLCLLLLLGLVLTLVSC) form the signal peptide. H38 (proton acceptor) is an active-site residue. Cystine bridges form between C47/C106, C61/C118, C79/C133, and C86/C94. 62 to 66 (KDLNT) contributes to the substrate binding site. N-linked (GlcNAc...) asparagine glycosylation occurs at N114. H150 functions as the Proton donor in the catalytic mechanism.

The protein belongs to the pancreatic ribonuclease family.

It carries out the reaction an [RNA] containing cytidine + H2O = an [RNA]-3'-cytidine-3'-phosphate + a 5'-hydroxy-ribonucleotide-3'-[RNA].. The enzyme catalyses an [RNA] containing uridine + H2O = an [RNA]-3'-uridine-3'-phosphate + a 5'-hydroxy-ribonucleotide-3'-[RNA].. Its function is as follows. This is a non-secretory ribonuclease. It is a pyrimidine specific nuclease with a slight preference for U. Cytotoxin and helminthotoxin. Possesses a wide variety of biological activities. This Mus musculus (Mouse) protein is Ribonuclease 2B.